The following is a 236-amino-acid chain: CHD1 helical C-terminal domain containing protein 1 (236 aa).

The interval 44-145 (LDQDTFKTCK…SSQPAKFLVT (102 aa)) is CHD1 helical C-terminal domain (CHCT). Residues 184-236 (LSNMQTPGQGSPLPGQPRSQDHVKKDSLRELSQKPKLKRKRIKEAPETPETEP) form a disordered region. Over residues 202-216 (SQDHVKKDSLRELSQ) the composition is skewed to basic and acidic residues.

The protein localises to the cytoplasm. It is found in the nucleus. Functionally, may play a role in regulation of apoptosis. The protein is CHD1 helical C-terminal domain containing protein 1 of Homo sapiens (Human).